A 502-amino-acid chain; its full sequence is Glutamate decarboxylase (502 aa).

An N6-(pyridoxal phosphate)lysine modification is found at Lys278. Residues 471–502 form a calmodulin-binding region; that stretch reads GLHHFHMDTVETQKDIIKHWRKIAGKKTSGVC.

It belongs to the group II decarboxylase family. The cofactor is pyridoxal 5'-phosphate.

It catalyses the reaction L-glutamate + H(+) = 4-aminobutanoate + CO2. In terms of biological role, catalyzes the production of GABA. The calmodulin-binding is calcium-dependent and it is proposed that this may, directly or indirectly, form a calcium regulated control of GABA biosynthesis. This is Glutamate decarboxylase from Solanum lycopersicum (Tomato).